Consider the following 97-residue polypeptide: Aspartyl/glutamyl-tRNA(Asn/Gln) amidotransferase subunit C (97 aa).

Belongs to the GatC family. Heterotrimer of A, B and C subunits.

It catalyses the reaction L-glutamyl-tRNA(Gln) + L-glutamine + ATP + H2O = L-glutaminyl-tRNA(Gln) + L-glutamate + ADP + phosphate + H(+). The catalysed reaction is L-aspartyl-tRNA(Asn) + L-glutamine + ATP + H2O = L-asparaginyl-tRNA(Asn) + L-glutamate + ADP + phosphate + 2 H(+). Its function is as follows. Allows the formation of correctly charged Asn-tRNA(Asn) or Gln-tRNA(Gln) through the transamidation of misacylated Asp-tRNA(Asn) or Glu-tRNA(Gln) in organisms which lack either or both of asparaginyl-tRNA or glutaminyl-tRNA synthetases. The reaction takes place in the presence of glutamine and ATP through an activated phospho-Asp-tRNA(Asn) or phospho-Glu-tRNA(Gln). In Sulfolobus acidocaldarius (strain ATCC 33909 / DSM 639 / JCM 8929 / NBRC 15157 / NCIMB 11770), this protein is Aspartyl/glutamyl-tRNA(Asn/Gln) amidotransferase subunit C.